The following is a 368-amino-acid chain: MNKRDYYEVLGLSQGASKDEIKKAYRRLAKKYHPDVSKEENAIEKFKEVQEAYEVLSDDQKRAQYDQFGHAGPNQGFGGGGDFGGGFGFEDIFSSFFGGGGGRRRDPNAPRQGADLQYQVTLEFEEAIFGKELNVEIPVEDPCDTCKGSGAKPGTSKETCKHCSGSGQVSVEQNTPFGRIVNRQACGHCSGTGQMIKEKCTTCHGSGKVRKRKKINVKIPAGIDNGQQIRVSGKGEAGVNGGPAGDLYVVVHVRNHEFFEREGDHIICEMPITFAQMALGAEVEVPTVHGKVKLKIPAGTQTGTEFRLKGKGAPNVRGYGQGDQYVVVRVVVPTKLTSHQKDLLREFAGQEEQDDSLFRKLKRAFKGE.

A J domain is found at 5–69; that stretch reads DYYEVLGLSQ…QKRAQYDQFG (65 aa). Residues 130 to 212 form a CR-type zinc finger; that stretch reads GKELNVEIPV…CHGSGKVRKR (83 aa). Residues Cys143, Cys146, Cys160, Cys163, Cys186, Cys189, Cys200, and Cys203 each coordinate Zn(2+). 4 CXXCXGXG motif repeats span residues 143–150, 160–167, 186–193, and 200–207; these read CDTCKGSG, CKHCSGSG, CGHCSGTG, and CTTCHGSG.

Belongs to the DnaJ family. Homodimer. It depends on Zn(2+) as a cofactor.

The protein localises to the cytoplasm. Its function is as follows. Participates actively in the response to hyperosmotic and heat shock by preventing the aggregation of stress-denatured proteins and by disaggregating proteins, also in an autonomous, DnaK-independent fashion. Unfolded proteins bind initially to DnaJ; upon interaction with the DnaJ-bound protein, DnaK hydrolyzes its bound ATP, resulting in the formation of a stable complex. GrpE releases ADP from DnaK; ATP binding to DnaK triggers the release of the substrate protein, thus completing the reaction cycle. Several rounds of ATP-dependent interactions between DnaJ, DnaK and GrpE are required for fully efficient folding. Also involved, together with DnaK and GrpE, in the DNA replication of plasmids through activation of initiation proteins. This is Chaperone protein DnaJ from Bacillus mycoides (strain KBAB4) (Bacillus weihenstephanensis).